A 265-amino-acid chain; its full sequence is Probable enoyl-CoA hydratase 1, peroxisomal (265 aa).

M1 is modified (N-acetylmethionine). Residues 68 to 72 and A112 contribute to the substrate site; that span reads SGVDL. The Microbody targeting signal signature appears at 263–265; it reads SKL.

It belongs to the enoyl-CoA hydratase/isomerase family.

Its subcellular location is the peroxisome. It catalyses the reaction a (3S)-3-hydroxyacyl-CoA = a (2E)-enoyl-CoA + H2O. The enzyme catalyses a 4-saturated-(3S)-3-hydroxyacyl-CoA = a (3E)-enoyl-CoA + H2O. It functions in the pathway lipid metabolism; fatty acid beta-oxidation. In terms of biological role, straight-chain enoyl-CoA thioesters from C4 up to at least C16 are processed, although with decreasing catalytic rate. The polypeptide is Probable enoyl-CoA hydratase 1, peroxisomal (Arabidopsis thaliana (Mouse-ear cress)).